A 554-amino-acid chain; its full sequence is Glutamine--tRNA ligase (554 aa).

The 'HIGH' region motif lies at 34–44 (PEPNGYLHIGH). Residues 35–37 (EPN) and 41–47 (HIGHAKS) each bind ATP. Residues Asp67 and Tyr212 each contribute to the L-glutamine site. Residues Thr231, 261-262 (RL), and 269-271 (MSK) contribute to the ATP site. Residues 268–272 (VMSKR) carry the 'KMSKS' region motif. The tract at residues 317–324 (TKQDNTIE) is interaction with tRNA.

This sequence belongs to the class-I aminoacyl-tRNA synthetase family. In terms of assembly, monomer.

Its subcellular location is the cytoplasm. The catalysed reaction is tRNA(Gln) + L-glutamine + ATP = L-glutaminyl-tRNA(Gln) + AMP + diphosphate. This Escherichia coli O17:K52:H18 (strain UMN026 / ExPEC) protein is Glutamine--tRNA ligase.